Consider the following 508-residue polypeptide: 2,3-bisphosphoglycerate-independent phosphoglycerate mutase (508 aa).

2 residues coordinate Mn(2+): Asp-13 and Ser-63. Ser-63 functions as the Phosphoserine intermediate in the catalytic mechanism. Substrate contacts are provided by residues His-122, Arg-152–Asp-153, Arg-184, Arg-190, Arg-256–Arg-259, and Lys-330. 5 residues coordinate Mn(2+): Asp-397, His-401, Asp-438, His-439, and His-457.

Belongs to the BPG-independent phosphoglycerate mutase family. In terms of assembly, monomer. Mn(2+) serves as cofactor.

It carries out the reaction (2R)-2-phosphoglycerate = (2R)-3-phosphoglycerate. It functions in the pathway carbohydrate degradation; glycolysis; pyruvate from D-glyceraldehyde 3-phosphate: step 3/5. Catalyzes the interconversion of 2-phosphoglycerate and 3-phosphoglycerate. This chain is 2,3-bisphosphoglycerate-independent phosphoglycerate mutase, found in Laribacter hongkongensis (strain HLHK9).